The primary structure comprises 148 residues: Arginine repressor (148 aa).

It belongs to the ArgR family.

Its subcellular location is the cytoplasm. It participates in amino-acid biosynthesis; L-arginine biosynthesis [regulation]. Regulates arginine biosynthesis genes. This is Arginine repressor from Chlorobium phaeovibrioides (strain DSM 265 / 1930) (Prosthecochloris vibrioformis (strain DSM 265)).